Here is a 160-residue protein sequence, read N- to C-terminus: Probable chemoreceptor glutamine deamidase CheD 1 (160 aa).

This sequence belongs to the CheD family.

The enzyme catalyses L-glutaminyl-[protein] + H2O = L-glutamyl-[protein] + NH4(+). Probably deamidates glutamine residues to glutamate on methyl-accepting chemotaxis receptors (MCPs), playing an important role in chemotaxis. This Syntrophus aciditrophicus (strain SB) protein is Probable chemoreceptor glutamine deamidase CheD 1.